The chain runs to 976 residues: Dibasic-processing endoprotease (976 aa).

Positions M1–A17 are cleaved as a signal peptide. The N-linked (GlcNAc...) asparagine glycan is linked to N156. The segment covering A172–D212 has biased composition (basic and acidic residues). The interval A172 to M246 is disordered. Residues K213–A231 are compositionally biased toward acidic residues. One can recognise a Peptidase S8 domain in the interval Q277 to V595. 2 N-linked (GlcNAc...) asparagine glycosylation sites follow: N291 and N299. Catalysis depends on D311, which acts as the Charge relay system. The N-linked (GlcNAc...) asparagine glycan is linked to N336. Residues H349 and S528 each act as charge relay system in the active site. Residues H524–V544 form a helical membrane-spanning segment. The P/Homo B domain maps to V604–D737. The N-linked (GlcNAc...) asparagine glycan is linked to N606. Residues G733 to D848 are disordered. Over residues E734–D830 the composition is skewed to basic and acidic residues. The helical transmembrane segment at A855 to A875 threads the bilayer. The N-linked (GlcNAc...) asparagine glycan is linked to N886. The tract at residues P914 to G976 is disordered. Basic and acidic residues-rich tracts occupy residues E915–Y928 and M940–G976.

The protein belongs to the peptidase S8 family. Furin subfamily.

The protein resides in the membrane. This is Dibasic-processing endoprotease (XPR6) from Yarrowia lipolytica (strain CLIB 122 / E 150) (Yeast).